Here is a 598-residue protein sequence, read N- to C-terminus: Aspartate--tRNA(Asp/Asn) ligase (598 aa).

An L-aspartate-binding site is contributed by Glu-175. The tract at residues 199-202 (QQFK) is aspartate. Arg-221 and His-452 together coordinate L-aspartate. An ATP-binding site is contributed by 221-223 (RDE). Glu-486 is an ATP binding site. Arg-493 serves as a coordination point for L-aspartate. 538–541 (GVDR) is a binding site for ATP.

Belongs to the class-II aminoacyl-tRNA synthetase family. Type 1 subfamily. In terms of assembly, homodimer.

Its subcellular location is the cytoplasm. It carries out the reaction tRNA(Asx) + L-aspartate + ATP = L-aspartyl-tRNA(Asx) + AMP + diphosphate. Aspartyl-tRNA synthetase with relaxed tRNA specificity since it is able to aspartylate not only its cognate tRNA(Asp) but also tRNA(Asn). Reaction proceeds in two steps: L-aspartate is first activated by ATP to form Asp-AMP and then transferred to the acceptor end of tRNA(Asp/Asn). This is Aspartate--tRNA(Asp/Asn) ligase from Gluconobacter oxydans (strain 621H) (Gluconobacter suboxydans).